Consider the following 175-residue polypeptide: Crossover junction endodeoxyribonuclease RuvC (175 aa).

Active-site residues include aspartate 12, glutamate 72, and aspartate 144. Mg(2+) contacts are provided by aspartate 12, glutamate 72, and aspartate 144.

It belongs to the RuvC family. In terms of assembly, homodimer which binds Holliday junction (HJ) DNA. The HJ becomes 2-fold symmetrical on binding to RuvC with unstacked arms; it has a different conformation from HJ DNA in complex with RuvA. In the full resolvosome a probable DNA-RuvA(4)-RuvB(12)-RuvC(2) complex forms which resolves the HJ. It depends on Mg(2+) as a cofactor.

The protein resides in the cytoplasm. It carries out the reaction Endonucleolytic cleavage at a junction such as a reciprocal single-stranded crossover between two homologous DNA duplexes (Holliday junction).. In terms of biological role, the RuvA-RuvB-RuvC complex processes Holliday junction (HJ) DNA during genetic recombination and DNA repair. Endonuclease that resolves HJ intermediates. Cleaves cruciform DNA by making single-stranded nicks across the HJ at symmetrical positions within the homologous arms, yielding a 5'-phosphate and a 3'-hydroxyl group; requires a central core of homology in the junction. The consensus cleavage sequence is 5'-(A/T)TT(C/G)-3'. Cleavage occurs on the 3'-side of the TT dinucleotide at the point of strand exchange. HJ branch migration catalyzed by RuvA-RuvB allows RuvC to scan DNA until it finds its consensus sequence, where it cleaves and resolves the cruciform DNA. This is Crossover junction endodeoxyribonuclease RuvC from Beijerinckia indica subsp. indica (strain ATCC 9039 / DSM 1715 / NCIMB 8712).